Consider the following 120-residue polypeptide: Small ribosomal subunit protein uS13 (120 aa).

A disordered region spans residues 93–120; that stretch reads RRGLPCRGQKTKTNARTRKGKRKTVGAA.

Belongs to the universal ribosomal protein uS13 family. As to quaternary structure, part of the 30S ribosomal subunit. Forms a loose heterodimer with protein S19. Forms two bridges to the 50S subunit in the 70S ribosome.

Its function is as follows. Located at the top of the head of the 30S subunit, it contacts several helices of the 16S rRNA. In the 70S ribosome it contacts the 23S rRNA (bridge B1a) and protein L5 of the 50S subunit (bridge B1b), connecting the 2 subunits; these bridges are implicated in subunit movement. Contacts the tRNAs in the A and P-sites. The chain is Small ribosomal subunit protein uS13 from Sulfurovum sp. (strain NBC37-1).